We begin with the raw amino-acid sequence, 456 residues long: Probable galactarate/D-glucarate transporter GudP (456 aa).

A run of 10 helical transmembrane segments spans residues Tyr11–Ile31, Tyr51–Leu71, Lys78–Tyr96, Ile102–Ala119, Ile246–Val266, Gly280–Ile300, Thr317–Ala337, Val341–Val361, Phe381–Gly401, and Ser408–Ile428.

Belongs to the major facilitator superfamily. Phthalate permease family.

The protein resides in the cell inner membrane. The catalysed reaction is galactarate(in) + H(+)(in) = galactarate(out) + H(+)(out). The enzyme catalyses D-glucarate(in) + H(+)(in) = D-glucarate(out) + H(+)(out). Probably involved in the uptake of galactarate and/or D-glucarate. This is Probable galactarate/D-glucarate transporter GudP (gudP) from Pseudomonas putida (Arthrobacter siderocapsulatus).